The following is an 86-amino-acid chain: Large ribosomal subunit protein uL23 (86 aa).

This sequence belongs to the universal ribosomal protein uL23 family. In terms of assembly, part of the 50S ribosomal subunit. Contacts protein L29.

Binds to 23S rRNA. One of the proteins that surrounds the polypeptide exit tunnel on the outside of the ribosome. The polypeptide is Large ribosomal subunit protein uL23 (Methanobrevibacter smithii (strain ATCC 35061 / DSM 861 / OCM 144 / PS)).